Here is a 396-residue protein sequence, read N- to C-terminus: Acetylornithine aminotransferase 2 (396 aa).

Pyridoxal 5'-phosphate contacts are provided by residues 102 to 103 and F134; that span reads GA. N(2)-acetyl-L-ornithine is bound at residue R137. 219–222 serves as a coordination point for pyridoxal 5'-phosphate; the sequence is DEVQ. The residue at position 248 (K248) is an N6-(pyridoxal phosphate)lysine. T276 contributes to the pyridoxal 5'-phosphate binding site.

It belongs to the class-III pyridoxal-phosphate-dependent aminotransferase family. ArgD subfamily. As to quaternary structure, homodimer. Requires pyridoxal 5'-phosphate as cofactor.

The protein localises to the cytoplasm. It carries out the reaction N(2)-acetyl-L-ornithine + 2-oxoglutarate = N-acetyl-L-glutamate 5-semialdehyde + L-glutamate. The protein operates within amino-acid biosynthesis; L-arginine biosynthesis; N(2)-acetyl-L-ornithine from L-glutamate: step 4/4. In Bordetella pertussis (strain Tohama I / ATCC BAA-589 / NCTC 13251), this protein is Acetylornithine aminotransferase 2.